The chain runs to 201 residues: Sterile alpha motif domain-containing protein 12 (201 aa).

An SAM domain is found at 77 to 143 (WTQQDVCKWL…LQQVLQLKVR (67 aa)).

Expressed in the brain.

In Homo sapiens (Human), this protein is Sterile alpha motif domain-containing protein 12 (SAMD12).